A 663-amino-acid chain; its full sequence is Fructose-1,6-bisphosphatase class 3 1 (663 aa).

This sequence belongs to the FBPase class 3 family. Requires Mn(2+) as cofactor.

The catalysed reaction is beta-D-fructose 1,6-bisphosphate + H2O = beta-D-fructose 6-phosphate + phosphate. It functions in the pathway carbohydrate biosynthesis; gluconeogenesis. The protein is Fructose-1,6-bisphosphatase class 3 1 of Clostridium beijerinckii (strain ATCC 51743 / NCIMB 8052) (Clostridium acetobutylicum).